A 161-amino-acid polypeptide reads, in one-letter code: Protein-export protein SecB (161 aa).

This sequence belongs to the SecB family. In terms of assembly, homotetramer, a dimer of dimers. One homotetramer interacts with 1 SecA dimer.

Its subcellular location is the cytoplasm. In terms of biological role, one of the proteins required for the normal export of preproteins out of the cell cytoplasm. It is a molecular chaperone that binds to a subset of precursor proteins, maintaining them in a translocation-competent state. It also specifically binds to its receptor SecA. This Shewanella sp. (strain MR-7) protein is Protein-export protein SecB.